A 286-amino-acid chain; its full sequence is Bifunctional protein FolD (286 aa).

Residues 164-166 and isoleucine 230 each bind NADP(+); that span reads GTS.

It belongs to the tetrahydrofolate dehydrogenase/cyclohydrolase family. Homodimer.

The enzyme catalyses (6R)-5,10-methylene-5,6,7,8-tetrahydrofolate + NADP(+) = (6R)-5,10-methenyltetrahydrofolate + NADPH. The catalysed reaction is (6R)-5,10-methenyltetrahydrofolate + H2O = (6R)-10-formyltetrahydrofolate + H(+). It functions in the pathway one-carbon metabolism; tetrahydrofolate interconversion. In terms of biological role, catalyzes the oxidation of 5,10-methylenetetrahydrofolate to 5,10-methenyltetrahydrofolate and then the hydrolysis of 5,10-methenyltetrahydrofolate to 10-formyltetrahydrofolate. This is Bifunctional protein FolD from Mesoplasma florum (strain ATCC 33453 / NBRC 100688 / NCTC 11704 / L1) (Acholeplasma florum).